The chain runs to 489 residues: GTPase Der (489 aa).

2 EngA-type G domains span residues 3-166 (PVVA…FDDV) and 201-374 (IKLA…DSST). GTP contacts are provided by residues 9-16 (GRPNVGKS), 56-60 (DTGGI), 118-121 (NKTD), 207-214 (GRPNVGKS), 254-258 (DTAGV), and 319-322 (NKWD). The region spanning 375 to 459 (KRISTSILTR…PIRIEFREGT (85 aa)) is the KH-like domain.

Belongs to the TRAFAC class TrmE-Era-EngA-EngB-Septin-like GTPase superfamily. EngA (Der) GTPase family. As to quaternary structure, associates with the 50S ribosomal subunit.

In terms of biological role, GTPase that plays an essential role in the late steps of ribosome biogenesis. The chain is GTPase Der from Psychromonas ingrahamii (strain DSM 17664 / CCUG 51855 / 37).